We begin with the raw amino-acid sequence, 276 residues long: MAPMADSSVDDLKNDVKRLEQRIAELESRLAGHGGVAAATESVRMILMGPPGAGKGTQAPRIKEKFCACHLATGDMLRAQVAAKTPLGREAKKIMDAGGLVSDEIMVNMIKTELENNQECARGFILDGFPRTVTQAEKLDGMLAATKKPLQHAVELQIDDGLLVSRITGRLVHPASGRSYHKIFNPPKAPMTDDVTGEPLIQRSDDNAETLKKRLSTYHAQTAPVVAYYQKTGIWKPIDASQEPGQVWKSLLKIFDDKAMVAGRSGSLLNKIGLKN.

52–57 (GAGKGT) lines the ATP pocket. An NMP region spans residues 72–101 (ATGDMLRAQVAAKTPLGREAKKIMDAGGLV). Residues threonine 73, arginine 78, 99 to 101 (GLV), 128 to 131 (GFPR), and glutamine 135 each bind AMP. The segment at 169–206 (GRLVHPASGRSYHKIFNPPKAPMTDDVTGEPLIQRSDD) is LID. ATP is bound by residues arginine 170 and 179–180 (SY). Arginine 203 and arginine 214 together coordinate AMP. Glutamine 242 is a binding site for ATP.

The protein belongs to the adenylate kinase family. AK2 subfamily. As to quaternary structure, monomer.

The protein resides in the cytoplasm. It localises to the cytosol. The protein localises to the mitochondrion intermembrane space. The enzyme catalyses AMP + ATP = 2 ADP. Its function is as follows. Catalyzes the reversible transfer of the terminal phosphate group between ATP and AMP. Plays an important role in cellular energy homeostasis and in adenine nucleotide metabolism. Adenylate kinase activity is critical for regulation of the phosphate utilization and the AMP de novo biosynthesis pathways. The protein is Adenylate kinase (adk1) of Pyrenophora tritici-repentis (strain Pt-1C-BFP) (Wheat tan spot fungus).